A 542-amino-acid chain; its full sequence is Probable serine/threonine-protein kinase ndrB (542 aa).

Residues 1 to 52 (MNVERKLESLSLQQQQQEEQQDESEQPNQGVEDEEEEEYDEEEYEEEEEDIN) are disordered. A compositionally biased stretch (low complexity) spans 9 to 18 (SLSLQQQQQE). Residues 19–51 (EQQDESEQPNQGVEDEEEEEYDEEEYEEEEEDI) show a composition bias toward acidic residues. One can recognise a Protein kinase domain in the interval 130–437 (FESIRIIGRG…VEEIQSHPFF (308 aa)). ATP-binding positions include 136–144 (IGRGAFGEV) and Lys-159. The Proton acceptor role is filled by Asp-258. Positions 438–510 (KGVDWRRLRE…RNFDAMRDAF (73 aa)) constitute an AGC-kinase C-terminal domain. Positions 452–486 (IIPQLSSPTDTSNFDHYEEEQQPEPMQPVQSKSRR) are disordered. Over residues 455–465 (QLSSPTDTSNF) the composition is skewed to polar residues.

Belongs to the protein kinase superfamily. AGC Ser/Thr protein kinase family.

The protein localises to the cytoplasm. It catalyses the reaction L-seryl-[protein] + ATP = O-phospho-L-seryl-[protein] + ADP + H(+). The enzyme catalyses L-threonyl-[protein] + ATP = O-phospho-L-threonyl-[protein] + ADP + H(+). The polypeptide is Probable serine/threonine-protein kinase ndrB (ndrB) (Dictyostelium discoideum (Social amoeba)).